The sequence spans 679 residues: MGIRGLMSFVEDHSNEFFTDLKLRDTKIVIDGYALFHRLCFSSNLDLRYGGDYDSFADVVQKFFESLFACNICPYVVLDGGCDISDKKLTTLKDRAREKIQMAHSLSVGGSGYVCPLLIREVFIQVLIKLRVCFVQCFSEADRDIMTLANHWNCPVLSSDSDFCIFDLKTGFCPLNSFQWRNMDTIKGTQNYIPAKCFSLDAFCHHFSNMNKALLPLFAVLCGNDHVNLPIMETFLSKARLPLGATSSKGRRHHRILGLLNWLSHFANPTEALDNVLKYLPKKDRENVKELLCCSMEEYQQSQVKLQDFFQCGTYVCPDALNLGLPEWVLVALAKGQLSPFISDALVLRRTILPTQVENMQQPNAHRISQPIRQIIYGLLLNASPHLDKTSWNALPPQPLAFSEVERINKNIRTSIIDAVELAKDHSDLSRLTELSLRRRQMLLLETLKVKQTILEPIPTSLKLPIAVSCYWLQHTETKAKLHHLQSLLLTMLVGPLIAIINSPGKEELQEDGAKMLYAEFQRVKAQTRLGTRLDLDTAHIFCQWQSCLQMGMYLNQLLPTPLPEPDLTRLYSGSLVHGLCQQLLASTSVESLLSICPEAKQLYEYLFNATRSYAPAEIFLPKGRSNSKKKRQKKQNTSCSKNRGRTTAHTKCWYEGNNRFGLLMVENLEEHSEASNIE.

The segment at 351 to 400 is interaction with SHLD2; that stretch reads TILPTQVENMQQPNAHRISQPIRQIIYGLLLNASPHLDKTSWNALPPQPL. The disordered stretch occupies residues 625-645; sequence RSNSKKKRQKKQNTSCSKNRG. Residues 626-635 show a composition bias toward basic residues; the sequence is SNSKKKRQKK.

Belongs to the asteroid family. As to quaternary structure, interacts with SHLD1, SHLD2, SHLD3, RIF1 and MAD2L2/REV7.

In terms of biological role, structure-specific DNA endonuclease that specifically cleaves single-stranded DNA and 3' overhang DNA. Contributes to the control of DNA double-strand break repair choice by antagonizing BRCA1-dependent homologous recombination (HR) and promoting non-homologous end-joining (NHEJ). Recruited to the single-stranded DNA ends by SHLD2 and cleaves the 3' exposed DNA ends, therefore inhibiting DNA end resection (necessary for HR) and promoting DNA end protection (necessary for NHEJ). The polypeptide is Single-strand DNA endonuclease ASTE1 (ASTE1) (Pongo abelii (Sumatran orangutan)).